Reading from the N-terminus, the 778-residue chain is Transcription factor kayak (778 aa).

2 stretches are compositionally biased toward low complexity: residues alanine 24 to glutamine 54 and glutamine 77 to leucine 98. Disordered regions lie at residues alanine 24–leucine 57, asparagine 76–arginine 130, glutamine 183–glycine 223, alanine 294–serine 320, alanine 356–glycine 414, and arginine 427–arginine 478. Over residues proline 99 to glutamate 108 the composition is skewed to polar residues. 2 stretches are compositionally biased toward low complexity: residues glutamine 109–arginine 130 and glutamine 183–asparagine 222. A compositionally biased stretch (low complexity) spans isoleucine 382–glycine 402. Positions asparagine 403–glycine 414 are enriched in gly residues. The segment covering arginine 427–threonine 436 has biased composition (polar residues). One can recognise a bZIP domain in the interval glutamate 457–histidine 520. The interval lysine 459 to arginine 478 is basic motif. The segment at leucine 485–leucine 513 is leucine-zipper. A compositionally biased stretch (low complexity) spans glycine 550–glycine 571. Disordered regions lie at residues glycine 550 to proline 594 and threonine 756 to leucine 778. The span at threonine 579–proline 589 shows a compositional bias: polar residues. A Phosphoserine modification is found at serine 588.

The protein belongs to the bZIP family. Fos subfamily. In terms of assembly, homodimer. Heterodimer with Jra. The kay-Jra heterodimer binds more stably to the AP-1 site than either of the two proteins alone.

The protein resides in the nucleus. In terms of biological role, developmentally regulated transcription factor AP-1 binds and recognizes the enhancer DNA sequence: 5'-TGA[CG]TCA-3'. May play a role in the function or determination of a particular subset of cells in the developing embryo. It is able to carry out its function either independently of or in conjunction with Jra. This chain is Transcription factor kayak, found in Drosophila pseudoobscura pseudoobscura (Fruit fly).